A 319-amino-acid chain; its full sequence is Probable secreted beta-glucosidase C2G2.17c (319 aa).

The signal sequence occupies residues 1–19 (MLFNNFLCFAVSAIPLVSA). N-linked (GlcNAc...) asparagine glycans are attached at residues Asn36, Asn39, Asn45, Asn48, and Asn221.

This sequence belongs to the SUN family.

The protein resides in the secreted. Its function is as follows. Cell surface beta-glucosidase involved in cell wall biogenesis. The protein is Probable secreted beta-glucosidase C2G2.17c of Schizosaccharomyces pombe (strain 972 / ATCC 24843) (Fission yeast).